Here is a 149-residue protein sequence, read N- to C-terminus: Large ribosomal subunit protein bL9 (149 aa).

It belongs to the bacterial ribosomal protein bL9 family.

In terms of biological role, binds to the 23S rRNA. This is Large ribosomal subunit protein bL9 from Sulfurihydrogenibium sp. (strain YO3AOP1).